The primary structure comprises 502 residues: UPF0371 protein CLD_0424 (502 aa).

The protein belongs to the UPF0371 family.

The protein is UPF0371 protein CLD_0424 of Clostridium botulinum (strain Okra / Type B1).